Here is a 250-residue protein sequence, read N- to C-terminus: Probable septum site-determining protein MinC (250 aa).

Residues 110 to 143 are disordered; that stretch reads SGARERPLEPEPEVVKKPEPAPAPPPPPEPEVRP. The span at 112–128 shows a compositional bias: basic and acidic residues; the sequence is ARERPLEPEPEVVKKPE. Residues 129 to 138 show a composition bias toward pro residues; that stretch reads PAPAPPPPPE.

It belongs to the MinC family. Interacts with MinD and FtsZ.

Its function is as follows. Cell division inhibitor that blocks the formation of polar Z ring septums. Rapidly oscillates between the poles of the cell to destabilize FtsZ filaments that have formed before they mature into polar Z rings. Prevents FtsZ polymerization. This chain is Probable septum site-determining protein MinC, found in Pseudomonas putida (strain ATCC 47054 / DSM 6125 / CFBP 8728 / NCIMB 11950 / KT2440).